Consider the following 309-residue polypeptide: Malate dehydrogenase (309 aa).

NAD(+) contacts are provided by residues 7–12 (GAGHVG) and Asp-32. The substrate site is built by Arg-81 and Arg-87. Residues Asn-94 and 117–119 (VSN) contribute to the NAD(+) site. Substrate-binding residues include Asn-119 and Arg-150. His-174 acts as the Proton acceptor in catalysis.

This sequence belongs to the LDH/MDH superfamily. MDH type 3 family.

The enzyme catalyses (S)-malate + NAD(+) = oxaloacetate + NADH + H(+). Functionally, catalyzes the reversible oxidation of malate to oxaloacetate. The chain is Malate dehydrogenase from Chlorobium phaeovibrioides (strain DSM 265 / 1930) (Prosthecochloris vibrioformis (strain DSM 265)).